A 689-amino-acid polypeptide reads, in one-letter code: Glycine--tRNA ligase beta subunit (689 aa).

The protein belongs to the class-II aminoacyl-tRNA synthetase family. Tetramer of two alpha and two beta subunits.

Its subcellular location is the cytoplasm. It catalyses the reaction tRNA(Gly) + glycine + ATP = glycyl-tRNA(Gly) + AMP + diphosphate. This Erwinia tasmaniensis (strain DSM 17950 / CFBP 7177 / CIP 109463 / NCPPB 4357 / Et1/99) protein is Glycine--tRNA ligase beta subunit.